Consider the following 463-residue polypeptide: uncharacterized protein (463 aa).

Residues 1 to 23 (MKFSSIPIASTLLSLLVASSVTA) form the signal peptide. Disordered regions lie at residues 174-200 (STYN…TKAS) and 239-258 (GAST…QRKN).

This sequence belongs to the but2 family.

It localises to the cytoplasm. This is an uncharacterized protein from Schizosaccharomyces pombe (strain 972 / ATCC 24843) (Fission yeast).